The following is a 118-amino-acid chain: V-type proton ATPase subunit G 2 (118 aa).

Residues 8–57 (IQQLLQAEKRAAEKVADARKRKARRLKQAKEEAQMEVDQYRREREQEFQS) adopt a coiled-coil conformation. The interval 25–90 (ARKRKARRLK…VQGMQSSQQR (66 aa)) is disordered. Residues 35 to 55 (QAKEEAQMEVDQYRREREQEF) show a composition bias toward basic and acidic residues. Composition is skewed to polar residues over residues 56–69 (QSKQ…QGNL) and 78–89 (RRQVQGMQSSQQ).

This sequence belongs to the V-ATPase G subunit family. In terms of assembly, V-ATPase is a heteromultimeric enzyme made up of two complexes: the ATP-hydrolytic V1 complex and the proton translocation V0 complex. The V1 complex consists of three catalytic AB heterodimers that form a heterohexamer, three peripheral stalks each consisting of EG heterodimers, one central rotor including subunits D and F, and the regulatory subunits C and H. The proton translocation complex V0 consists of the proton transport subunit a, a ring of proteolipid subunits c9c'', rotary subunit d, subunits e and f, and the accessory subunits ATP6AP1/Ac45 and ATP6AP2/PRR. In terms of tissue distribution, expressed in brain (at protein level).

It localises to the melanosome. Its subcellular location is the cytoplasmic vesicle. The protein resides in the clathrin-coated vesicle membrane. Functionally, subunit of the V1 complex of vacuolar(H+)-ATPase (V-ATPase), a multisubunit enzyme composed of a peripheral complex (V1) that hydrolyzes ATP and a membrane integral complex (V0) that translocates protons. V-ATPase is responsible for acidifying and maintaining the pH of intracellular compartments and in some cell types, is targeted to the plasma membrane, where it is responsible for acidifying the extracellular environment. This Bos taurus (Bovine) protein is V-type proton ATPase subunit G 2.